Here is a 195-residue protein sequence, read N- to C-terminus: Imidazoleglycerol-phosphate dehydratase (195 aa).

This sequence belongs to the imidazoleglycerol-phosphate dehydratase family.

It localises to the cytoplasm. It carries out the reaction D-erythro-1-(imidazol-4-yl)glycerol 3-phosphate = 3-(imidazol-4-yl)-2-oxopropyl phosphate + H2O. It participates in amino-acid biosynthesis; L-histidine biosynthesis; L-histidine from 5-phospho-alpha-D-ribose 1-diphosphate: step 6/9. This chain is Imidazoleglycerol-phosphate dehydratase, found in Burkholderia thailandensis (strain ATCC 700388 / DSM 13276 / CCUG 48851 / CIP 106301 / E264).